A 224-amino-acid chain; its full sequence is UPF0502 protein Psyr_2419 (224 aa).

The protein belongs to the UPF0502 family.

This Pseudomonas syringae pv. syringae (strain B728a) protein is UPF0502 protein Psyr_2419.